Reading from the N-terminus, the 875-residue chain is DNA topoisomerase 3-beta (875 aa).

A Toprim domain is found at 3-153 (SVLMVAEKPS…QVTYRAHFSA (151 aa)). Residues 170–589 (NENEAKSVDA…AIKIFKLKFM (420 aa)) form the Topo IA-type catalytic domain. Tyr-332 acts as the O-(5'-phospho-DNA)-tyrosine intermediate in catalysis. Residues 371 to 391 (QTPRKGKDAGDHPPITPMKLG) are disordered.

This sequence belongs to the type IA topoisomerase family.

It carries out the reaction ATP-independent breakage of single-stranded DNA, followed by passage and rejoining.. Its function is as follows. Releases the supercoiling and torsional tension of DNA introduced during the DNA replication and transcription by transiently cleaving and rejoining one strand of the DNA duplex. Introduces a single-strand break via transesterification at a target site in duplex DNA. The scissile phosphodiester is attacked by the catalytic tyrosine of the enzyme, resulting in the formation of a DNA-(5'-phosphotyrosyl)-enzyme intermediate and the expulsion of a 3'-OH DNA strand. The free DNA strand than undergoes passage around the unbroken strand thus removing DNA supercoils. Finally, in the religation step, the DNA 3'-OH attacks the covalent intermediate to expel the active-site tyrosine and restore the DNA phosphodiester backbone. Weakly relaxes negative supercoils and displays a distinct preference for binding single-stranded DNA. This is DNA topoisomerase 3-beta (Top3beta) from Drosophila melanogaster (Fruit fly).